Reading from the N-terminus, the 381-residue chain is Heme A synthase (381 aa).

The disordered stretch occupies residues 1 to 28 (MSNRTIFEEVSSDSKQQSSPTPGGIDRK). The next 8 helical transmembrane spans lie at 36–56 (IRVW…VGGL), 125–145 (VIGL…SIPT), 151–171 (LLLP…MVAS), 187–207 (LATH…YMFL), 230–250 (STGL…VAGI), 287–307 (LVQF…VVVW), 320–340 (FAFN…IVTV), and 344–364 (APVE…VLIL). His-292 provides a ligand contact to heme. His-352 is a binding site for heme.

The protein belongs to the COX15/CtaA family. Type 2 subfamily. As to quaternary structure, interacts with CtaB. Heme b is required as a cofactor.

Its subcellular location is the cell membrane. The enzyme catalyses Fe(II)-heme o + 2 A + H2O = Fe(II)-heme a + 2 AH2. It functions in the pathway porphyrin-containing compound metabolism; heme A biosynthesis; heme A from heme O: step 1/1. Functionally, catalyzes the conversion of heme O to heme A by two successive hydroxylations of the methyl group at C8. The first hydroxylation forms heme I, the second hydroxylation results in an unstable dihydroxymethyl group, which spontaneously dehydrates, resulting in the formyl group of heme A. In Ruegeria sp. (strain TM1040) (Silicibacter sp.), this protein is Heme A synthase.